A 228-amino-acid polypeptide reads, in one-letter code: Probable septum site-determining protein MinC (228 aa).

The protein belongs to the MinC family. As to quaternary structure, interacts with MinD and FtsZ.

Functionally, cell division inhibitor that blocks the formation of polar Z ring septums. Rapidly oscillates between the poles of the cell to destabilize FtsZ filaments that have formed before they mature into polar Z rings. Prevents FtsZ polymerization. This is Probable septum site-determining protein MinC from Bacillus cytotoxicus (strain DSM 22905 / CIP 110041 / 391-98 / NVH 391-98).